A 342-amino-acid chain; its full sequence is S-adenosylmethionine:tRNA ribosyltransferase-isomerase (342 aa).

This sequence belongs to the QueA family. Monomer.

It is found in the cytoplasm. The catalysed reaction is 7-aminomethyl-7-carbaguanosine(34) in tRNA + S-adenosyl-L-methionine = epoxyqueuosine(34) in tRNA + adenine + L-methionine + 2 H(+). The protein operates within tRNA modification; tRNA-queuosine biosynthesis. Functionally, transfers and isomerizes the ribose moiety from AdoMet to the 7-aminomethyl group of 7-deazaguanine (preQ1-tRNA) to give epoxyqueuosine (oQ-tRNA). The sequence is that of S-adenosylmethionine:tRNA ribosyltransferase-isomerase from Campylobacter jejuni (strain RM1221).